A 227-amino-acid polypeptide reads, in one-letter code: Cytochrome c oxidase subunit 2 (227 aa).

The Mitochondrial intermembrane portion of the chain corresponds to 1–14 (MAYPLQLGFQDATS). A helical transmembrane segment spans residues 15-45 (PIMEELLHFHDHTLMIVFLISSLVLYIISLM). The Mitochondrial matrix segment spans residues 46 to 59 (LTTKLTHTSTMDAQ). The helical transmembrane segment at 60–87 (EVETIWTILPAIILILIALPSLRILYMM) threads the bilayer. Over 88–227 (DEINNPSLTI…HFEKWSTSML (140 aa)) the chain is Mitochondrial intermembrane. Residues histidine 161, cysteine 196, glutamate 198, cysteine 200, histidine 204, and methionine 207 each coordinate Cu cation. Glutamate 198 is a Mg(2+) binding site.

It belongs to the cytochrome c oxidase subunit 2 family. As to quaternary structure, component of the cytochrome c oxidase (complex IV, CIV), a multisubunit enzyme composed of 14 subunits. The complex is composed of a catalytic core of 3 subunits MT-CO1, MT-CO2 and MT-CO3, encoded in the mitochondrial DNA, and 11 supernumerary subunits COX4I, COX5A, COX5B, COX6A, COX6B, COX6C, COX7A, COX7B, COX7C, COX8 and NDUFA4, which are encoded in the nuclear genome. The complex exists as a monomer or a dimer and forms supercomplexes (SCs) in the inner mitochondrial membrane with NADH-ubiquinone oxidoreductase (complex I, CI) and ubiquinol-cytochrome c oxidoreductase (cytochrome b-c1 complex, complex III, CIII), resulting in different assemblies (supercomplex SCI(1)III(2)IV(1) and megacomplex MCI(2)III(2)IV(2)). Found in a complex with TMEM177, COA6, COX18, COX20, SCO1 and SCO2. Interacts with TMEM177 in a COX20-dependent manner. Interacts with COX20. Interacts with COX16. Requires Cu cation as cofactor.

It is found in the mitochondrion inner membrane. It catalyses the reaction 4 Fe(II)-[cytochrome c] + O2 + 8 H(+)(in) = 4 Fe(III)-[cytochrome c] + 2 H2O + 4 H(+)(out). Functionally, component of the cytochrome c oxidase, the last enzyme in the mitochondrial electron transport chain which drives oxidative phosphorylation. The respiratory chain contains 3 multisubunit complexes succinate dehydrogenase (complex II, CII), ubiquinol-cytochrome c oxidoreductase (cytochrome b-c1 complex, complex III, CIII) and cytochrome c oxidase (complex IV, CIV), that cooperate to transfer electrons derived from NADH and succinate to molecular oxygen, creating an electrochemical gradient over the inner membrane that drives transmembrane transport and the ATP synthase. Cytochrome c oxidase is the component of the respiratory chain that catalyzes the reduction of oxygen to water. Electrons originating from reduced cytochrome c in the intermembrane space (IMS) are transferred via the dinuclear copper A center (CU(A)) of subunit 2 and heme A of subunit 1 to the active site in subunit 1, a binuclear center (BNC) formed by heme A3 and copper B (CU(B)). The BNC reduces molecular oxygen to 2 water molecules using 4 electrons from cytochrome c in the IMS and 4 protons from the mitochondrial matrix. The chain is Cytochrome c oxidase subunit 2 (MT-CO2) from Rhinoceros unicornis (Greater Indian rhinoceros).